A 394-amino-acid chain; its full sequence is Aromatic-amino-acid aminotransferase (394 aa).

Substrate-binding residues include G34, Y65, W127, and N180. N6-(pyridoxal phosphate)lysine is present on K243. R371 provides a ligand contact to substrate.

Belongs to the class-I pyridoxal-phosphate-dependent aminotransferase family. In terms of assembly, homodimer. Pyridoxal 5'-phosphate serves as cofactor.

The protein localises to the cytoplasm. The enzyme catalyses an aromatic L-alpha-amino acid + 2-oxoglutarate = an aromatic oxo-acid + L-glutamate. Functionally, shows activities toward both dicarboxylic and aromatic substrates. This is Aromatic-amino-acid aminotransferase (tyrB) from Paracoccus denitrificans.